Consider the following 221-residue polypeptide: PKHD-type hydroxylase NATL1_16191 (221 aa).

Residues 80-174 enclose the Fe2OG dioxygenase domain; that stretch reads LIHGVMFTQS…RHVCVGWIQS (95 aa). Fe cation is bound by residues H98, D100, and H155. R165 contributes to the 2-oxoglutarate binding site.

Fe(2+) is required as a cofactor. The cofactor is L-ascorbate.

The protein is PKHD-type hydroxylase NATL1_16191 of Prochlorococcus marinus (strain NATL1A).